The sequence spans 269 residues: Diaminopimelate epimerase (269 aa).

Substrate-binding residues include Asn-20 and Asn-63. The active-site Proton donor is the Cys-72. Substrate-binding positions include 73 to 74, Asn-179, and 197 to 198; these read GN and ER. The Proton acceptor role is filled by Cys-207. Residue 208 to 209 participates in substrate binding; that stretch reads GT.

Belongs to the diaminopimelate epimerase family. In terms of assembly, homodimer.

The protein localises to the cytoplasm. It carries out the reaction (2S,6S)-2,6-diaminopimelate = meso-2,6-diaminopimelate. It functions in the pathway amino-acid biosynthesis; L-lysine biosynthesis via DAP pathway; DL-2,6-diaminopimelate from LL-2,6-diaminopimelate: step 1/1. Its function is as follows. Catalyzes the stereoinversion of LL-2,6-diaminopimelate (L,L-DAP) to meso-diaminopimelate (meso-DAP), a precursor of L-lysine and an essential component of the bacterial peptidoglycan. This is Diaminopimelate epimerase from Chlamydia muridarum (strain MoPn / Nigg).